Here is a 363-residue protein sequence, read N- to C-terminus: Nucleoporin SEH1 (363 aa).

WD repeat units lie at residues 15–54, 60–101, 108–149, 158–206, 223–264, and 287–326; these read AHRD…NWRR, CHGG…SEKD, QWIR…RIYE, RWNL…VIYE, DLPC…SAIL, and GDHR…QWVK.

It belongs to the WD repeat SEC13 family. In terms of assembly, component of the nuclear pore complex (NPC). Probably part of the GATOR complex.

It localises to the nucleus. The protein localises to the nuclear pore complex. The protein resides in the lysosome membrane. Its subcellular location is the nucleus envelope. Its function is as follows. Probable component of the nuclear pore complex (NPC) which is involved in the trafficking of macromolecules between the cytoplasm and nucleus. Functionally, as a component of the GATOR complex may function in the amino acid-sensing branch of the TORC1 signaling pathway. This Caenorhabditis elegans protein is Nucleoporin SEH1.